The chain runs to 587 residues: Glutamine--tRNA ligase (587 aa).

The 'HIGH' region motif lies at 58 to 68; it reads PEPNGYLHIGH. ATP contacts are provided by residues 59 to 61 and 65 to 71; these read EPN and HIGHAKS. Asp-91 and Tyr-240 together coordinate L-glutamine. ATP contacts are provided by residues Thr-259 and 294–295; that span reads RL. Residues 301–305 carry the 'KMSKS' region motif; sequence VTSKR.

It belongs to the class-I aminoacyl-tRNA synthetase family. In terms of assembly, monomer.

It is found in the cytoplasm. The enzyme catalyses tRNA(Gln) + L-glutamine + ATP = L-glutaminyl-tRNA(Gln) + AMP + diphosphate. The polypeptide is Glutamine--tRNA ligase (Bordetella pertussis (strain Tohama I / ATCC BAA-589 / NCTC 13251)).